The primary structure comprises 185 residues: Elongation factor P (185 aa).

Belongs to the elongation factor P family.

The protein localises to the cytoplasm. It participates in protein biosynthesis; polypeptide chain elongation. Its function is as follows. Involved in peptide bond synthesis. Stimulates efficient translation and peptide-bond synthesis on native or reconstituted 70S ribosomes in vitro. Probably functions indirectly by altering the affinity of the ribosome for aminoacyl-tRNA, thus increasing their reactivity as acceptors for peptidyl transferase. This Bacillus pumilus (strain SAFR-032) protein is Elongation factor P.